Here is a 253-residue protein sequence, read N- to C-terminus: tRNA (guanine-N(1)-)-methyltransferase (253 aa).

S-adenosyl-L-methionine contacts are provided by residues Gly113 and 133-138 (IGDYVL).

This sequence belongs to the RNA methyltransferase TrmD family. As to quaternary structure, homodimer.

It is found in the cytoplasm. It carries out the reaction guanosine(37) in tRNA + S-adenosyl-L-methionine = N(1)-methylguanosine(37) in tRNA + S-adenosyl-L-homocysteine + H(+). In terms of biological role, specifically methylates guanosine-37 in various tRNAs. The protein is tRNA (guanine-N(1)-)-methyltransferase of Chloroflexus aurantiacus (strain ATCC 29366 / DSM 635 / J-10-fl).